A 289-amino-acid chain; its full sequence is Syntaxin-3 (289 aa).

Residues 1 to 263 (MKDRLEQLKA…MKYQGQARKK (263 aa)) are Cytoplasmic-facing. Residues 32-111 (MDEFFSEIEE…IEEDEVRSSA (80 aa)) adopt a coiled-coil conformation. Residues 191 to 253 (LSEIEGRHKD…EKARDETKRA (63 aa)) enclose the t-SNARE coiled-coil homology domain. The chain crosses the membrane as a helical; Anchor for type IV membrane protein span at residues 264 to 284 (LIIIIVIVVVLLGILALIIGL). The Extracellular portion of the chain corresponds to 285–289 (SVGLK).

It belongs to the syntaxin family. As to quaternary structure, interacts with REEP6. Interacts with PRPH2 in rod and cone photoreceptors. Interacts with ROM1. Interacts with SNAP25. Interacts with VAMP2. Heart, spleen, lung and kidney.

It is found in the membrane. Potentially involved in docking of synaptic vesicles at presynaptic active zones. Apical receptor involved in membrane fusion of apical vesicles. Essential for survival of retinal photoreceetors. This chain is Syntaxin-3 (Stx3), found in Rattus norvegicus (Rat).